The sequence spans 486 residues: 23S rRNA (uracil(1939)-C(5))-methyltransferase RlmD (486 aa).

Residues 10–71 (TVKAPEYLPD…SSFEKAVVMA (62 aa)) form the TRAM domain. The [4Fe-4S] cluster site is built by cysteine 84, cysteine 94, cysteine 97, and cysteine 176. Glutamine 285, phenylalanine 314, asparagine 319, glutamate 335, asparagine 370, and aspartate 391 together coordinate S-adenosyl-L-methionine. Catalysis depends on cysteine 442, which acts as the Nucleophile.

Belongs to the class I-like SAM-binding methyltransferase superfamily. RNA M5U methyltransferase family. RlmD subfamily.

It catalyses the reaction uridine(1939) in 23S rRNA + S-adenosyl-L-methionine = 5-methyluridine(1939) in 23S rRNA + S-adenosyl-L-homocysteine + H(+). Catalyzes the formation of 5-methyl-uridine at position 1939 (m5U1939) in 23S rRNA. The polypeptide is 23S rRNA (uracil(1939)-C(5))-methyltransferase RlmD (Polaromonas sp. (strain JS666 / ATCC BAA-500)).